A 909-amino-acid polypeptide reads, in one-letter code: Epithelial discoidin domain-containing receptor 1 (909 aa).

Residues 1–18 form the signal peptide; sequence MGPEALSSLLLLLLVASG. The Extracellular segment spans residues 21–413; sequence DMKGHFDPAK…VAKAEGSPTA (393 aa). The F5/8 type C domain maps to 31-181; sequence CRYALGMQDR…VCLRVELYGC (151 aa). Cystine bridges form between Cys-31–Cys-181 and Cys-70–Cys-173. Positions 45 to 60 are enriched in low complexity; the sequence is SDISASSSWSDSTAAR. The tract at residues 45-65 is disordered; sequence SDISASSSWSDSTAARHSSDG. Positions 188 to 363 are DS-like domain; sequence LSYTAPVGQT…LFSEISFISD (176 aa). Asn-207, Gln-226, Asp-229, Val-231, Tyr-249, and Tyr-251 together coordinate Ca(2+). Asn-207 carries N-linked (GlcNAc...) asparagine glycosylation. Residue Asn-256 is glycosylated (N-linked (GlcNAc...) asparagine). A disulfide bridge links Cys-299 with Cys-344. The Ca(2+) site is built by Ser-356 and Glu-357. Residues Asn-366 and Asn-390 are each glycosylated (N-linked (GlcNAc...) asparagine). Residues 414–434 traverse the membrane as a helical segment; it reads ILIGCLVAIILLLLLIIALML. Residues 435–909 are Cytoplasmic-facing; it reads WRLHWRRLLS…FLAEDALNTV (475 aa). The tract at residues 466–495 is disordered; it reads ILINNRPGPREPPPYQEPRPRGNPPHSAPC. Residues 475–492 show a composition bias toward pro residues; the sequence is REPPPYQEPRPRGNPPHS. A PPxY motif motif is present at residues 477–480; the sequence is PPPY. 3 positions are modified to phosphotyrosine; by autocatalysis: Tyr-480, Tyr-509, and Tyr-516. Residues 606–901 enclose the Protein kinase domain; that stretch reads LRFKEKLGEG…PPFSQLHRFL (296 aa). An ATP-binding site is contributed by 612-620; sequence LGEGQFGEV. Ser-627 is modified (phosphoserine). Lys-651 serves as a coordination point for ATP. Residue Tyr-736 is modified to Phosphotyrosine; by autocatalysis. Catalysis depends on Asp-762, which acts as the Proton acceptor. Phosphotyrosine; by autocatalysis occurs at positions 788, 792, and 793.

The protein belongs to the protein kinase superfamily. Tyr protein kinase family. Insulin receptor subfamily. In terms of assembly, homodimer. Interacts (via PPxY motif) with WWC1 (via WW domains) in a collagen-regulated manner. Forms a tripartite complex with WWC1 and PRKCZ, but predominantly in the absence of collagen. Interacts (tyrosine phosphorylated) with SHC1. Interacts with SRC. Interacts with MYH9. Interacts with CDH1. Interacts with PTPN11. Interacts with NCK2. Autophosphorylated in response to fibrillar collagen binding.

Its subcellular location is the cell membrane. It catalyses the reaction L-tyrosyl-[protein] + ATP = O-phospho-L-tyrosyl-[protein] + ADP + H(+). In terms of biological role, tyrosine kinase that functions as a cell surface receptor for fibrillar collagen and regulates cell attachment to the extracellular matrix, remodeling of the extracellular matrix, cell migration, differentiation, survival and cell proliferation. Collagen binding triggers a signaling pathway that involves SRC and leads to the activation of MAP kinases. Regulates remodeling of the extracellular matrix by up-regulation of the matrix metalloproteinases MMP2, MMP7 and MMP9, and thereby facilitates cell migration and wound healing. Promotes smooth muscle cell migration, and thereby contributes to arterial wound healing. Also plays a role in tumor cell invasion. Phosphorylates PTPN11. Required for normal blastocyst implantation during pregnancy, for normal mammary gland differentiation and normal lactation. Required for normal ear morphology and normal hearing. The chain is Epithelial discoidin domain-containing receptor 1 (DDR1) from Pan troglodytes (Chimpanzee).